A 216-amino-acid chain; its full sequence is Protein Syd (216 aa).

The protein belongs to the Syd family.

The protein localises to the cell inner membrane. Its function is as follows. Interacts with the SecY protein in vivo. May bind preferentially to an uncomplexed state of SecY, thus functioning either as a chelating agent for excess SecY in the cell or as a regulatory factor that negatively controls the translocase function. This is Protein Syd from Shewanella baltica (strain OS223).